A 174-amino-acid polypeptide reads, in one-letter code: Calcium-binding protein F (174 aa).

4 consecutive EF-hand domains span residues 9–44 (KIFQ…KMDG), 60–83 (VDMD…EAKK), 92–127 (AALA…NGHT), and 133–162 (DQVL…RRID). Ca(2+) is bound by residues aspartate 22, asparagine 24, aspartate 26, serine 28, and aspartate 33. Positions 105, 107, 109, 111, 116, 140, 142, 144, 146, and 151 each coordinate Ca(2+).

The polypeptide is Calcium-binding protein F (cbpF) (Dictyostelium discoideum (Social amoeba)).